Here is a 163-residue protein sequence, read N- to C-terminus: Large ribosomal subunit protein uL11 (163 aa).

Residues 1 to 26 (MAETIEVLVAGGQADPGPPLGPELGP) are disordered.

Belongs to the universal ribosomal protein uL11 family. Part of the ribosomal stalk of the 50S ribosomal subunit. Interacts with L10 and the large rRNA to form the base of the stalk. L10 forms an elongated spine to which L12 dimers bind in a sequential fashion forming a multimeric L10(L12)X complex.

In terms of biological role, forms part of the ribosomal stalk which helps the ribosome interact with GTP-bound translation factors. This chain is Large ribosomal subunit protein uL11, found in Halobacterium salinarum (strain ATCC 29341 / DSM 671 / R1).